The chain runs to 131 residues: Anaerobic and virulence modulator AnvM (131 aa).

Plays an essential role by modulating the expression of hundreds of genes including quorum sensing system genes and oxidative stress resistance genes under both aerobic and anaerobic conditions. The chain is Anaerobic and virulence modulator AnvM from Pseudomonas aeruginosa (strain ATCC 15692 / DSM 22644 / CIP 104116 / JCM 14847 / LMG 12228 / 1C / PRS 101 / PAO1).